A 344-amino-acid chain; its full sequence is UDP-glycosyltransferase 73C4 (344 aa).

Residues Ser145, 202-203 (WA), 220-228 (HCGWNSSLE), and 242-245 (FAEQ) contribute to the UDP-alpha-D-glucose site.

This sequence belongs to the UDP-glycosyltransferase family. As to expression, expressed in flowers and fruits.

The protein localises to the cytoplasm. Its subcellular location is the nucleus. Functionally, probable glucosyltransferase that cannot glycosylate abscisic acid (ABA) and auxin (IAA). This is UDP-glycosyltransferase 73C4 from Solanum lycopersicum (Tomato).